We begin with the raw amino-acid sequence, 236 residues long: Thrombin-like enzyme kangshuanmei (236 aa).

The 227-residue stretch at 1–227 (VIGGDECNIN…HLDWIQSIIA (227 aa)) folds into the Peptidase S1 domain. 6 disulfides stabilise this stretch: Cys-7/Cys-141, Cys-28/Cys-44, Cys-78/Cys-234, Cys-120/Cys-188, Cys-152/Cys-167, and Cys-178/Cys-203. His-43 serves as the catalytic Charge relay system. Asn-81 is a glycosylation site (N-linked (GlcNAc...) asparagine). The Charge relay system role is filled by Asp-88. Residues Asn-99 and Asn-148 are each glycosylated (N-linked (GlcNAc...) asparagine). The Charge relay system role is filled by Ser-182. A glycan (N-linked (GlcNAc...) asparagine) is linked at Asn-229.

This sequence belongs to the peptidase S1 family. Snake venom subfamily. In terms of assembly, monomer. Post-translationally, N-glycosylated by units composed of Fuc, Man, GlcNAc, Gal and NeuAC residues. Expressed by the venom gland.

Its subcellular location is the secreted. Inhibited by 4-(2-aminoethyl)-benzensulfonyl fluoride. Not inhibited by antithrombin-III. Thrombin-like snake venom serine protease. Cleaves bonds after Arg and Lys, converts fibrinogen (FGA and FGB) to fibrin and releases both fibrinopeptides A and B, and fibrinogen peptide Bbeta1-42. Has a blood clotting activity. The chain is Thrombin-like enzyme kangshuanmei from Gloydius brevicauda (Korean slamosa snake).